The primary structure comprises 614 residues: Replication protein A 70 kDa DNA-binding subunit (614 aa).

Residues 112–178 (GNPVPYNEGQ…SSVKTPGGTQ (67 aa)) are disordered. 2 stretches are compositionally biased toward polar residues: residues 120-130 (GQGQQRSSAPT) and 158-178 (PSNQFSKASAPSSVKTPGGTQ). Positions 194–278 (WTICARVTQK…VKNDYEITFN (85 aa)) form a DNA-binding region, OB. A C4-type zinc finger spans residues 478–500 (CPSQDCNKKVIDQQNGLYRCEKC).

This sequence belongs to the replication factor A protein 1 family. As to quaternary structure, component of the heterotrimeric canonical replication protein A complex (RPA).

It localises to the nucleus. The protein resides in the PML body. In terms of biological role, as part of the heterotrimeric replication protein A complex (RPA/RP-A), binds and stabilizes single-stranded DNA intermediates, that form during DNA replication or upon DNA stress. It prevents their reannealing and in parallel, recruits and activates different proteins and complexes involved in DNA metabolism. Thereby, it plays an essential role both in DNA replication and the cellular response to DNA damage. The protein is Replication protein A 70 kDa DNA-binding subunit (RPA1) of Gallus gallus (Chicken).